Consider the following 631-residue polypeptide: Probable potassium transport system protein Kup 1 (631 aa).

The next 12 membrane-spanning stretches (helical) occupy residues 16 to 36 (LGLSLAALGVVYGDIGTSPLY), 58 to 78 (VLSLIVWALILIVSLKYLVFV), 109 to 129 (VLVFLGLFGAALLYGDGTLTP), 145 to 165 (PLFHPYIVPITVVILILLFLI), 173 to 193 (VGALFGPVMVLWFTVLALLGI), 219 to 239 (GWSGFQVLGAVFLVVTGGEAL), 255 to 275 (WFCCVLPALLLNYFGQGALLL), 288 to 308 (LAPPWALYPLVLLATLATIIA), 345 to 365 (IYIPAVNWALMLATITLVAGF), 370 to 390 (GLAAAYGVAVATTMVITALLV), 402 to 422 (PLAVAGLTVVFLTVDLAFFGA), and 427 to 447 (VGAGGWIPLAAGLAVFTVMIT).

Belongs to the HAK/KUP transporter (TC 2.A.72) family.

The protein resides in the cell inner membrane. The catalysed reaction is K(+)(in) + H(+)(in) = K(+)(out) + H(+)(out). Transport of potassium into the cell. Likely operates as a K(+):H(+) symporter. In Geobacter sulfurreducens (strain ATCC 51573 / DSM 12127 / PCA), this protein is Probable potassium transport system protein Kup 1.